Consider the following 157-residue polypeptide: SsrA-binding protein (157 aa).

Positions 133-157 (LHDKRETEKKRDWSREKGRLLRARG) are disordered. Over residues 135 to 151 (DKRETEKKRDWSREKGR) the composition is skewed to basic and acidic residues.

The protein belongs to the SmpB family.

Its subcellular location is the cytoplasm. Its function is as follows. Required for rescue of stalled ribosomes mediated by trans-translation. Binds to transfer-messenger RNA (tmRNA), required for stable association of tmRNA with ribosomes. tmRNA and SmpB together mimic tRNA shape, replacing the anticodon stem-loop with SmpB. tmRNA is encoded by the ssrA gene; the 2 termini fold to resemble tRNA(Ala) and it encodes a 'tag peptide', a short internal open reading frame. During trans-translation Ala-aminoacylated tmRNA acts like a tRNA, entering the A-site of stalled ribosomes, displacing the stalled mRNA. The ribosome then switches to translate the ORF on the tmRNA; the nascent peptide is terminated with the 'tag peptide' encoded by the tmRNA and targeted for degradation. The ribosome is freed to recommence translation, which seems to be the essential function of trans-translation. In Bradyrhizobium diazoefficiens (strain JCM 10833 / BCRC 13528 / IAM 13628 / NBRC 14792 / USDA 110), this protein is SsrA-binding protein.